Here is a 21-residue protein sequence, read N- to C-terminus: C-phycocyanin alpha subunit (21 aa).

It belongs to the phycobiliprotein family. Heterodimer of an alpha and a beta subunit, which further assembles into trimers and the trimers into hexamers. Post-translationally, contains one covalently linked bilin chromophore.

It is found in the cellular thylakoid membrane. In terms of biological role, light-harvesting photosynthetic bile pigment-protein from the phycobiliprotein complex (phycobilisome, PBS). Phycocyanin is the major phycobiliprotein in the PBS rod. The chain is C-phycocyanin alpha subunit from Anabaena sp. (strain L31).